Here is a 45-residue protein sequence, read N- to C-terminus: uncharacterized protein (45 aa).

The C2H2-type zinc finger occupies 2–25 (YQCLRCGGIFNKRREVVEHLLVGH).

This is an uncharacterized protein from Sulfolobus spindle-shape virus 1 (SSV1).